Here is a 441-residue protein sequence, read N- to C-terminus: 3'-N-debenzoyl-2'-deoxytaxol N-benzoyltransferase (441 aa).

Residues His-163 and Asp-373 each act as proton acceptor in the active site.

Belongs to the plant acyltransferase family.

It carries out the reaction 3'-N-debenzoyltaxol + benzoyl-CoA = paclitaxel + CoA + H(+). It participates in alkaloid biosynthesis; taxol biosynthesis. In terms of biological role, catalyzes the stereoselective coupling of the surrogate substrate N-debenzoyl-(3'RS)-2'-deoxytaxol with benzoyl-CoA to form predominantly one 3'-epimer of 2'-deoxytaxol. This enzymatic reaction constitutes the final acylation in the taxol biosynthetic pathway. This Taxus canadensis (Canadian yew) protein is 3'-N-debenzoyl-2'-deoxytaxol N-benzoyltransferase.